The chain runs to 338 residues: Electron transfer flavoprotein subunit alpha (338 aa).

275 to 303 (IYIACAISGAIQPLAGMTGSDCIIAINKD) is an FAD binding site.

Belongs to the ETF alpha-subunit/FixB family. As to quaternary structure, heterodimer of an alpha and a beta subunit. FAD serves as cofactor.

Functionally, the electron transfer flavoprotein serves as a specific electron acceptor for other dehydrogenases. It transfers the electrons to the main respiratory chain via ETF-ubiquinone oxidoreductase (ETF dehydrogenase). The protein is Electron transfer flavoprotein subunit alpha (etfA) of Megasphaera elsdenii.